An 82-amino-acid chain; its full sequence is Protein Vpu (82 aa).

At 1–7 (MQPIPIV) the chain is on the extracellular side. The chain crosses the membrane as a helical span at residues 8 to 28 (AIVALVVAIIIAIVVWSIVII). Over 29-82 (EYRKILRQRKIDRLIDRLIERAEDSGNESEGEISALVEMGVEMGHHAPWDVDDL) the chain is Cytoplasmic. 2 positions are modified to phosphoserine; by host CK2: Ser53 and Ser57.

Belongs to the HIV-1 VPU protein family. Homopentamer. Interacts with host CD4 and BRTC; these interactions induce proteasomal degradation of CD4. Interacts (via transmembrane region) with host BST2 (via transmembrane region); this interaction leads to the degradation of host BST2. Interacts with host FBXW11. Interacts with host AP1M1; this interaction plays a role in the mistrafficking and subsequent degradation of host BST2. Interacts with host RANBP2; this interaction allows Vpu to down-regulate host BLM sumoylation. Phosphorylated by host CK2. This phosphorylation is necessary for interaction with human BTRC and degradation of CD4.

Its subcellular location is the host membrane. With respect to regulation, ion channel activity is inhibited by hexamethylene amiloride in vitro. Functionally, enhances virion budding by targeting host CD4 and Tetherin/BST2 to proteasome degradation. Degradation of CD4 prevents any unwanted premature interactions between viral Env and its host receptor CD4 in the endoplasmic reticulum. Degradation of antiretroviral protein Tetherin/BST2 is important for virion budding, as BST2 tethers new viral particles to the host cell membrane. Mechanistically, Vpu bridges either CD4 or BST2 to BTRC, a substrate recognition subunit of the Skp1/Cullin/F-box protein E3 ubiquitin ligase, induces their ubiquitination and subsequent proteasomal degradation. The alteration of the E3 ligase specificity by Vpu seems to promote the degradation of host IKBKB, leading to NF-kappa-B down-regulation and subsequent apoptosis. Acts as a viroporin that forms an oligomeric ion channel in membranes. Modulates the host DNA repair mechanisms to promote degradation of nuclear viral cDNA in cells that are already productively infected in order to suppress immune sensing and proviral hyper-integration (superinfection). Manipulates PML-NBs and modulates SUMOylation of host BLM protein thereby enhancing its DNA-end processing activity toward viral unintegrated linear DNA. Also inhibits RAD52-mediated homologous repair of viral cDNA, preventing the generation of dead-end circular forms of single copies of the long terminal repeat and permitting sustained nucleolytic attack. The polypeptide is Protein Vpu (Human immunodeficiency virus type 1 group M subtype B (isolate HXB2) (HIV-1)).